Reading from the N-terminus, the 324-residue chain is Glyoxylate/hydroxypyruvate reductase B (324 aa).

Active-site residues include Arg-237 and Glu-266. His-285 functions as the Proton donor in the catalytic mechanism.

This sequence belongs to the D-isomer specific 2-hydroxyacid dehydrogenase family. GhrB subfamily. Homodimer.

Its subcellular location is the cytoplasm. The catalysed reaction is glycolate + NADP(+) = glyoxylate + NADPH + H(+). It catalyses the reaction (R)-glycerate + NAD(+) = 3-hydroxypyruvate + NADH + H(+). The enzyme catalyses (R)-glycerate + NADP(+) = 3-hydroxypyruvate + NADPH + H(+). Catalyzes the NADPH-dependent reduction of glyoxylate and hydroxypyruvate into glycolate and glycerate, respectively. In Shigella flexneri serotype 5b (strain 8401), this protein is Glyoxylate/hydroxypyruvate reductase B.